A 348-amino-acid polypeptide reads, in one-letter code: Dihydroorotase (348 aa).

Residues His17 and His19 each coordinate Zn(2+). Substrate contacts are provided by residues 19-21 (HLR) and Asn45. Zn(2+) is bound by residues Lys103, His140, and His178. Residue Lys103 is modified to N6-carboxylysine. His140 contacts substrate. Leu223 provides a ligand contact to substrate. Asp251 serves as a coordination point for Zn(2+). Asp251 is an active-site residue. Positions 255 and 267 each coordinate substrate.

Belongs to the metallo-dependent hydrolases superfamily. DHOase family. Class II DHOase subfamily. Homodimer. Zn(2+) is required as a cofactor.

The catalysed reaction is (S)-dihydroorotate + H2O = N-carbamoyl-L-aspartate + H(+). It functions in the pathway pyrimidine metabolism; UMP biosynthesis via de novo pathway; (S)-dihydroorotate from bicarbonate: step 3/3. In terms of biological role, catalyzes the reversible cyclization of carbamoyl aspartate to dihydroorotate. In Enterobacter sp. (strain 638), this protein is Dihydroorotase.